We begin with the raw amino-acid sequence, 173 residues long: Protein-export protein SecB (173 aa).

This sequence belongs to the SecB family. As to quaternary structure, homotetramer, a dimer of dimers. One homotetramer interacts with 1 SecA dimer.

The protein resides in the cytoplasm. In terms of biological role, one of the proteins required for the normal export of preproteins out of the cell cytoplasm. It is a molecular chaperone that binds to a subset of precursor proteins, maintaining them in a translocation-competent state. It also specifically binds to its receptor SecA. This Novosphingobium aromaticivorans (strain ATCC 700278 / DSM 12444 / CCUG 56034 / CIP 105152 / NBRC 16084 / F199) protein is Protein-export protein SecB.